The chain runs to 145 residues: Large ribosomal subunit protein uL13 (145 aa).

Belongs to the universal ribosomal protein uL13 family. Part of the 50S ribosomal subunit.

Functionally, this protein is one of the early assembly proteins of the 50S ribosomal subunit, although it is not seen to bind rRNA by itself. It is important during the early stages of 50S assembly. The chain is Large ribosomal subunit protein uL13 from Staphylococcus saprophyticus subsp. saprophyticus (strain ATCC 15305 / DSM 20229 / NCIMB 8711 / NCTC 7292 / S-41).